The following is a 590-amino-acid chain: Muscarinic acetylcholine receptor M3 (590 aa).

Residues 1-67 (MTLHSNSTTS…DPLGGHTVWQ (67 aa)) are Extracellular-facing. Residues Asn6, Asn15, Asn41, and Asn48 are each glycosylated (N-linked (GlcNAc...) asparagine). Residues 68–91 (VVFIAFLTGILALVTIIGNILVIV) form a helical membrane-spanning segment. Residues 92 to 104 (SFKVNKQLKTVNN) lie on the Cytoplasmic side of the membrane. The helical transmembrane segment at 105-130 (YFLLSLACADLIIGVISMNLFTTYII) threads the bilayer. The Extracellular portion of the chain corresponds to 131 to 142 (MNRWALGNLACD). The cysteines at positions 141 and 221 are disulfide-linked. Residues 143–164 (LWLAIDYVASNASVMNLLVISF) traverse the membrane as a helical segment. The Cytoplasmic portion of the chain corresponds to 165–184 (DRYFSITRPLTYRAKRTTKR). A helical membrane pass occupies residues 185–206 (AGVMIGLAWVISFVLWAPAILF). At 207 to 229 (WQYFVGKRTVPPGECFIQFLSEP) the chain is on the extracellular side. Residues 230-252 (TITFGTAIAAFYMPVTIMTILYW) form a helical membrane-spanning segment. Over 253-491 (RIYKETEKRT…SLVKEKKAAQ (239 aa)) the chain is Cytoplasmic. Residues 275–281 (AETENFV) carry the Basolateral sorting signal motif. Positions 323–357 (SSEQMDQDHSSSDSWNNNDAAASLENSASSDEEDI) are disordered. The segment covering 334-345 (SDSWNNNDAAAS) has biased composition (low complexity). Ser385 bears the Phosphoserine mark. The helical transmembrane segment at 492–514 (TLSAILLAFIITWTPYNIMVLVN) threads the bilayer. Residues 515 to 526 (TFCDSCIPKTFW) are Extracellular-facing. A disulfide bridge links Cys517 with Cys520. Residues 527 to 546 (NLGYWLCYINSTVNPVCYAL) traverse the membrane as a helical segment. The Cytoplasmic portion of the chain corresponds to 547-590 (CNKTFRTTFKMLLLCQCDKKKRRKQQYQQRQSVIFHKRAPEQAL).

This sequence belongs to the G-protein coupled receptor 1 family. Muscarinic acetylcholine receptor subfamily. CHRM3 sub-subfamily. Homodimer; the dimers can form tetramers. Interacts with NALCN. Interacts with TMEM147.

The protein localises to the cell membrane. The protein resides in the postsynaptic cell membrane. It localises to the basolateral cell membrane. Its subcellular location is the endoplasmic reticulum membrane. In terms of biological role, the muscarinic acetylcholine receptor mediates various cellular responses, including inhibition of adenylate cyclase, breakdown of phosphoinositides and modulation of potassium channels through the action of G proteins. Primary transducing effect is Pi turnover. This Pongo pygmaeus (Bornean orangutan) protein is Muscarinic acetylcholine receptor M3 (CHRM3).